Here is a 336-residue protein sequence, read N- to C-terminus: CMP-sialic acid transporter (336 aa).

Residues 1 to 9 (MAQARENVS) lie on the Cytoplasmic side of the membrane. The helical transmembrane segment at 10 to 30 (LFFKLYCLAVMTLVAAAYTVA) threads the bilayer. Residues 31–45 (LRYTRTTAKELYFST) are Lumenal-facing. Residues 46–64 (TAVCVTEVIKLLISVGLLA) traverse the membrane as a helical segment. CMP-N-acetyl-beta-neuraminate is bound at residue lysine 55. Over 65–87 (KETGSLGRFKASLSENVLGSPKE) the chain is Cytoplasmic. Residues 88-108 (LMKLSVPSLVYAVQNNMAFLA) traverse the membrane as a helical segment. 101 to 102 (QN) provides a ligand contact to CMP-N-acetyl-beta-neuraminate. The Lumenal segment spans residues 109-114 (LSNLDA). A helical membrane pass occupies residues 115-135 (AVYQVTYQLKIPCTALCTVLM). Position 117-124 (117-124 (YQVTYQLK)) interacts with CMP-N-acetyl-beta-neuraminate. Residues 136 to 141 (LNRTLS) are Cytoplasmic-facing. A helical transmembrane segment spans residues 142 to 160 (KLQWVSVFMLCGGVILVQW). At 161–175 (KPAQATKVVVEQSPL) the chain is on the lumenal side. The helical transmembrane segment at 176 to 196 (LGFGAIAIAVLCSGFAGVYFE) threads the bilayer. A CMP-N-acetyl-beta-neuraminate-binding site is contributed by serine 188. Residues 197 to 209 (KVLKSSDTSLWVR) lie on the Cytoplasmic side of the membrane. Residue 210-214 (NIQMY) coordinates CMP-N-acetyl-beta-neuraminate. Residues 210–228 (NIQMYLSGIVVTLVGTYLS) traverse the membrane as a helical segment. Topologically, residues 229-243 (DGAEIKEKGFFYGYT) are lumenal. The chain crosses the membrane as a helical span at residues 244-262 (YYVWFVIFLASVGGLYTSV). Topologically, residues 263 to 269 (VVKYTDN) are cytoplasmic. The chain crosses the membrane as a helical span at residues 270–288 (IMKGFSAAAAIVLSTIASV). Lysine 272 provides a ligand contact to CMP-N-acetyl-beta-neuraminate. The Lumenal segment spans residues 289 to 296 (MLFGLQIT). Residues 297–315 (LSFAMGALLVCISIYLYGL) form a helical membrane-spanning segment. At 316–336 (PRQDTTCIQQEATSKERVIGV) the chain is on the cytoplasmic side. Positions 316–336 (PRQDTTCIQQEATSKERVIGV) are disordered.

The protein belongs to the nucleotide-sugar transporter family. SLC35A subfamily. As to quaternary structure, monomer.

It localises to the golgi apparatus membrane. It carries out the reaction CMP-N-acetyl-beta-neuraminate(in) + CMP(out) = CMP-N-acetyl-beta-neuraminate(out) + CMP(in). The enzyme catalyses CMP-N-acetyl-beta-neuraminate(in) + AMP(out) = CMP-N-acetyl-beta-neuraminate(out) + AMP(in). It catalyses the reaction CDP-L-ribitol(in) + CDP(out) = CDP-L-ribitol(out) + CDP(in). The catalysed reaction is UMP(out) + CMP-N-acetyl-beta-neuraminate(in) = UMP(in) + CMP-N-acetyl-beta-neuraminate(out). Functionally, transports CMP-sialic acid from the cytosol into the Golgi apparatus, functioning as an antiporter that exchanges CMP-sialic acid for CMP. Binds both CMP-sialic acid and free CMP, but has higher affinity for free CMP. Also able to exchange CMP-sialic acid for AMP and UMP. Also mediates the transport of CDP-ribitol. The sequence is that of CMP-sialic acid transporter (SLC35A1) from Cricetulus griseus (Chinese hamster).